A 249-amino-acid chain; its full sequence is Proteasome activator complex subunit 1 (249 aa).

A disordered region spans residues 59 to 102 (APLDIPVPDPVKEKEKEERKKQQEKEEKEEKKKGDEDDKGPPCG). Positions 68–98 (PVKEKEKEERKKQQEKEEKEEKKKGDEDDKG) are enriched in basic and acidic residues.

This sequence belongs to the PA28 family. As to quaternary structure, heterodimer of PSME1 and PSME2, which forms a hexameric ring. PSME1 can form homoheptamers.

Functionally, implicated in immunoproteasome assembly and required for efficient antigen processing. The PA28 activator complex enhances the generation of class I binding peptides by altering the cleavage pattern of the proteasome. This chain is Proteasome activator complex subunit 1 (Psme1), found in Mus musculus (Mouse).